Reading from the N-terminus, the 211-residue chain is Probable cytokinin riboside 5'-monophosphate phosphoribohydrolase LOGL3 (211 aa).

Substrate contacts are provided by residues Glu-84, 102–103 (RK), 119–125 (GYGTLEE), and Thr-131.

This sequence belongs to the LOG family. As to expression, expressed in roots, leaves, stems, tiller buds, shoot apex, immature inflorescences and flowers.

It carries out the reaction N(6)-(dimethylallyl)adenosine 5'-phosphate + H2O = N(6)-dimethylallyladenine + D-ribose 5-phosphate. The catalysed reaction is 9-ribosyl-trans-zeatin 5'-phosphate + H2O = trans-zeatin + D-ribose 5-phosphate. In terms of biological role, cytokinin-activating enzyme working in the direct activation pathway. Phosphoribohydrolase that converts inactive cytokinin nucleotides to the biologically active free-base forms. The sequence is that of Probable cytokinin riboside 5'-monophosphate phosphoribohydrolase LOGL3 (LOGL3) from Oryza sativa subsp. japonica (Rice).